A 367-amino-acid chain; its full sequence is Queuine tRNA-ribosyltransferase (367 aa).

The active-site Proton acceptor is aspartate 92. Residues 92-96, aspartate 146, glutamine 188, and glycine 215 contribute to the substrate site; that span reads DSGGF. The RNA binding stretch occupies residues 246 to 252; it reads GVGTPKD. The active-site Nucleophile is aspartate 265. Zn(2+) is bound by residues cysteine 303, cysteine 305, cysteine 308, and histidine 334.

It belongs to the queuine tRNA-ribosyltransferase family. Homodimer. Within each dimer, one monomer is responsible for RNA recognition and catalysis, while the other monomer binds to the replacement base PreQ1. Zn(2+) is required as a cofactor.

It catalyses the reaction 7-aminomethyl-7-carbaguanine + guanosine(34) in tRNA = 7-aminomethyl-7-carbaguanosine(34) in tRNA + guanine. The protein operates within tRNA modification; tRNA-queuosine biosynthesis. Catalyzes the base-exchange of a guanine (G) residue with the queuine precursor 7-aminomethyl-7-deazaguanine (PreQ1) at position 34 (anticodon wobble position) in tRNAs with GU(N) anticodons (tRNA-Asp, -Asn, -His and -Tyr). Catalysis occurs through a double-displacement mechanism. The nucleophile active site attacks the C1' of nucleotide 34 to detach the guanine base from the RNA, forming a covalent enzyme-RNA intermediate. The proton acceptor active site deprotonates the incoming PreQ1, allowing a nucleophilic attack on the C1' of the ribose to form the product. After dissociation, two additional enzymatic reactions on the tRNA convert PreQ1 to queuine (Q), resulting in the hypermodified nucleoside queuosine (7-(((4,5-cis-dihydroxy-2-cyclopenten-1-yl)amino)methyl)-7-deazaguanosine). The protein is Queuine tRNA-ribosyltransferase of Francisella tularensis subsp. tularensis (strain FSC 198).